We begin with the raw amino-acid sequence, 435 residues long: Xylose isomerase (435 aa).

Catalysis depends on residues histidine 100 and aspartate 103. Mg(2+) is bound by residues glutamate 231, glutamate 267, histidine 270, aspartate 295, aspartate 306, aspartate 308, and aspartate 338.

Belongs to the xylose isomerase family. Homotetramer. Mg(2+) is required as a cofactor.

It is found in the cytoplasm. It carries out the reaction alpha-D-xylose = alpha-D-xylulofuranose. This is Xylose isomerase from Brucella suis biovar 1 (strain 1330).